Reading from the N-terminus, the 981-residue chain is Serine/threonine-protein kinase D1044.8 (981 aa).

The region spanning 453–725 (YELLDQLGAG…MCGVRLLEYL (273 aa)) is the Protein kinase domain. ATP contacts are provided by residues 459–467 (LGAGAFGCV) and lysine 488. Aspartate 591 functions as the Proton acceptor in the catalytic mechanism. Polar residues predominate over residues 735-746 (TSDMTASQSSYN). Disordered regions lie at residues 735–802 (TSDM…PSSI) and 823–847 (IPSRRRVQTCSTEHPARSSSSTELK). Low complexity predominate over residues 752–762 (SPSSLNSSTSS). Over residues 830 to 847 (QTCSTEHPARSSSSTELK) the composition is skewed to polar residues.

This sequence belongs to the protein kinase superfamily. NEK Ser/Thr protein kinase family. NIMA subfamily. Mg(2+) serves as cofactor.

The enzyme catalyses L-seryl-[protein] + ATP = O-phospho-L-seryl-[protein] + ADP + H(+). It carries out the reaction L-threonyl-[protein] + ATP = O-phospho-L-threonyl-[protein] + ADP + H(+). The polypeptide is Serine/threonine-protein kinase D1044.8 (nekl-4) (Caenorhabditis elegans).